A 513-amino-acid polypeptide reads, in one-letter code: MGPTKYIIIAVVIIIICVILGLYIVDKKAKEKLSEASKEARRLKEEAERDAEAKKKEAILEAKEEAHKLRAEVERENRERRNEVQRLERRIIQKEEALDKKSEALENKEEALNKKQQKIEDVETHMEELHEKQRTELERISGLTTEQAKEFLLEQVRKEVKHETAVMIKEIETKAKEEADKRAREVITYAIQRCAADHVAETTVHVVNLPNDEMKGRIIGREGRNIRTLETLTGVDLIIDDTPEAVILSGFDPIRREVARIALEKLIVDGRIHPARIEEMVEKAKKEVEISIKEEGEQATFETGIHGLHIELIRLLGRLKYRTSYGQNVLKHSIEVSHLAGLMASELGIDPTLAKRVGLLHDIGKAVDHEVEGPHAIIGSEIAKKYRESALVVNAIGAHHGDMEPQSLEAILVQAADAISAARPGARRETLEAYIKRLEKLEEIANECEGVEKSYAIQAGREIRIMVKPEVLDDTGCIEMARNIVKQIESELEYPGQIKVNVIRETRAIEYAK.

The helical transmembrane segment at 6 to 26 (YIIIAVVIIIICVILGLYIVD) threads the bilayer. Positions 203–288 (TVHVVNLPND…EMVEKAKKEV (86 aa)) constitute a KH domain. Residues 329 to 422 (VLKHSIEVSH…VQAADAISAA (94 aa)) enclose the HD domain.

The protein belongs to the RNase Y family.

It localises to the cell membrane. Functionally, endoribonuclease that initiates mRNA decay. This Clostridium botulinum (strain ATCC 19397 / Type A) protein is Ribonuclease Y.